A 985-amino-acid polypeptide reads, in one-letter code: Translation initiation factor IF-2 (985 aa).

Composition is skewed to basic and acidic residues over residues 49–58 (QYGKKQEKSS), 65–89 (IQRE…RPDN), and 99–113 (VPNR…DKAK). Residues 49–401 (QYGKKQEKSS…QQSAPPPILD (353 aa)) are disordered. The span at 125 to 136 (SKTTTNSENEQT) shows a compositional bias: polar residues. Residues 137 to 162 (APRQGSAQQSGQGRPQANRPQGSQGR) show a composition bias toward low complexity. Gly residues-rich tracts occupy residues 180-246 (PQGG…GQGR) and 288-324 (PQGG…GAGR). A compositionally biased stretch (basic and acidic residues) spans 349–377 (KAPDKTKGDRRKNYEKDGKWADGQIEKNK). Over residues 378–391 (LFKGRNNKNKKRQH) the composition is skewed to basic residues. Positions 485–654 (LRPPVVTIMG…LLVAEVHELK (170 aa)) constitute a tr-type G domain. The G1 stretch occupies residues 494–501 (GHVDHGKT). 494–501 (GHVDHGKT) is a GTP binding site. Residues 519–523 (GITQH) are G2. The G3 stretch occupies residues 540–543 (DTPG). GTP-binding positions include 540 to 544 (DTPGH) and 594 to 597 (NKMD). Residues 594 to 597 (NKMD) are G4. Residues 630 to 632 (SAK) form a G5 region.

It belongs to the TRAFAC class translation factor GTPase superfamily. Classic translation factor GTPase family. IF-2 subfamily.

Its subcellular location is the cytoplasm. Functionally, one of the essential components for the initiation of protein synthesis. Protects formylmethionyl-tRNA from spontaneous hydrolysis and promotes its binding to the 30S ribosomal subunits. Also involved in the hydrolysis of GTP during the formation of the 70S ribosomal complex. This is Translation initiation factor IF-2 from Desulforamulus reducens (strain ATCC BAA-1160 / DSM 100696 / MI-1) (Desulfotomaculum reducens).